The chain runs to 334 residues: uncharacterized protein (334 aa).

2 helical membrane-spanning segments follow: residues 1–21 and 46–66; these read MFRLLLICITFLALYFGFTFI and ILGLLLLVSCFIIIRFLIIII.

The protein localises to the cell membrane. This is an uncharacterized protein from Rickettsia prowazekii (strain Madrid E).